A 351-amino-acid chain; its full sequence is MSPRSCLRSLRLLVFAVFSAAASNWLYLAKLSSVGSISEEETCEKLKGLIQRQVQMCKRNLEVMDSVRRGAQLAIEECQYQFRNRRWNCSTLDSLPVFGKVVTQGTREAAFVYAISSAGVAFAVTRACSSGELEKCGCDRTVHGVSPQGFQWSGCSDNIAYGVAFSQSFVDVRERSKGASSSRALMNLHNNEAGRKAILTHMRVECKCHGVSGSCEVKTCWRAVPPFRQVGHALKEKFDGATEVEPRRVGSSRALVPRNAQFKPHTDEDLVYLEPSPDFCEQDIRSGVLGTRGRTCNKTSKAIDGCELLCCGRGFHTAQVELAERCGCRFHWCCFVKCRQCQRLVEMHTCR.

Residues 1–22 form the signal peptide; it reads MSPRSCLRSLRLLVFAVFSAAA. 11 disulfides stabilise this stretch: cysteine 78–cysteine 89, cysteine 128–cysteine 136, cysteine 138–cysteine 155, cysteine 206–cysteine 220, cysteine 208–cysteine 215, cysteine 280–cysteine 311, cysteine 296–cysteine 306, cysteine 310–cysteine 350, cysteine 326–cysteine 341, cysteine 328–cysteine 338, and cysteine 333–cysteine 334. Asparagine 88 is a glycosylation site (N-linked (GlcNAc...) asparagine). Serine 212 carries the O-palmitoleoyl serine; by PORCN lipid modification. Residue asparagine 297 is glycosylated (N-linked (GlcNAc...) asparagine).

It belongs to the Wnt family. In terms of assembly, interacts with PORCN. Interacts with PKD1. In terms of processing, palmitoleoylation is required for efficient binding to frizzled receptors. Depalmitoleoylation leads to Wnt signaling pathway inhibition. In adults in lung and brain.

The protein localises to the secreted. The protein resides in the extracellular space. It is found in the extracellular matrix. Ligand for members of the frizzled family of seven transmembrane receptors. Plays an important role in the embryonic development of the urogenital tract and the lung. Required for normal mesenchyme to epithelium transition during embryonic kidney development. Required for the formation of early epithelial renal vesicles during kidney development. Required for normal formation of the Mullerian duct in females, and normal levels of oocytes in the ovaries. Required for normal down-regulation of 3 beta-hydroxysteroid dehydrogenase in the ovary. Required for normal lung development and for normal patterning of trachael cartilage rings. This chain is Protein Wnt-4 (Wnt4), found in Mus musculus (Mouse).